The primary structure comprises 325 residues: 5-dehydro-2-deoxygluconokinase (325 aa).

The protein belongs to the carbohydrate kinase PfkB family.

The catalysed reaction is 5-dehydro-2-deoxy-D-gluconate + ATP = 6-phospho-5-dehydro-2-deoxy-D-gluconate + ADP + H(+). It participates in polyol metabolism; myo-inositol degradation into acetyl-CoA; acetyl-CoA from myo-inositol: step 5/7. Functionally, catalyzes the phosphorylation of 5-dehydro-2-deoxy-D-gluconate (2-deoxy-5-keto-D-gluconate or DKG) to 6-phospho-5-dehydro-2-deoxy-D-gluconate (DKGP). The protein is 5-dehydro-2-deoxygluconokinase of Listeria monocytogenes serovar 1/2a (strain ATCC BAA-679 / EGD-e).